A 419-amino-acid chain; its full sequence is UDP-N-acetylglucosamine 1-carboxyvinyltransferase (419 aa).

Phosphoenolpyruvate is bound at residue 22 to 23 (KN). Arg-93 provides a ligand contact to UDP-N-acetyl-alpha-D-glucosamine. Cys-117 acts as the Proton donor in catalysis. The residue at position 117 (Cys-117) is a 2-(S-cysteinyl)pyruvic acid O-phosphothioketal. Positions 307 and 329 each coordinate UDP-N-acetyl-alpha-D-glucosamine.

The protein belongs to the EPSP synthase family. MurA subfamily.

The protein resides in the cytoplasm. It catalyses the reaction phosphoenolpyruvate + UDP-N-acetyl-alpha-D-glucosamine = UDP-N-acetyl-3-O-(1-carboxyvinyl)-alpha-D-glucosamine + phosphate. It participates in cell wall biogenesis; peptidoglycan biosynthesis. Functionally, cell wall formation. Adds enolpyruvyl to UDP-N-acetylglucosamine. This chain is UDP-N-acetylglucosamine 1-carboxyvinyltransferase, found in Shewanella woodyi (strain ATCC 51908 / MS32).